The chain runs to 434 residues: Glutamyl-tRNA reductase (434 aa).

Substrate is bound by residues 54–57 (TCNR), serine 113, 118–120 (EAQ), and glutamine 124. Cysteine 55 functions as the Nucleophile in the catalytic mechanism. 193 to 198 (GGGEVS) serves as a coordination point for NADP(+).

This sequence belongs to the glutamyl-tRNA reductase family. In terms of assembly, homodimer.

It catalyses the reaction (S)-4-amino-5-oxopentanoate + tRNA(Glu) + NADP(+) = L-glutamyl-tRNA(Glu) + NADPH + H(+). It functions in the pathway porphyrin-containing compound metabolism; protoporphyrin-IX biosynthesis; 5-aminolevulinate from L-glutamyl-tRNA(Glu): step 1/2. The protein operates within porphyrin-containing compound metabolism; chlorophyll biosynthesis. Functionally, catalyzes the NADPH-dependent reduction of glutamyl-tRNA(Glu) to glutamate 1-semialdehyde (GSA). In Chloroflexus aurantiacus (strain ATCC 29366 / DSM 635 / J-10-fl), this protein is Glutamyl-tRNA reductase.